Consider the following 404-residue polypeptide: Pleckstrin homology domain-containing family A member 1 (404 aa).

2 consecutive PH domains span residues 7 to 112 (QNRI…KAIK) and 191 to 289 (AVIK…GAIV). Disordered stretches follow at residues 291-332 (QRGP…RSNS) and 355-404 (NFKV…VSDV). Over residues 316-332 (TNAATATSHSTASRSNS) the composition is skewed to low complexity. Phosphoserine occurs at positions 332 and 362.

As to quaternary structure, interacts with MPDZ and PTPN13. Highly expressed in skeletal muscle, thymus, pancreas, placenta and lung. Detected at low levels in brain, heart, peripheral blood leukocytes, testis, ovary, spinal cord, thyroid, kidney, liver, small intestine and colon.

It localises to the cytoplasm. Its subcellular location is the cell membrane. The protein resides in the nucleus. Binds specifically to phosphatidylinositol 3,4-diphosphate (PtdIns3,4P2), but not to other phosphoinositides. May recruit other proteins to the plasma membrane. The protein is Pleckstrin homology domain-containing family A member 1 (PLEKHA1) of Homo sapiens (Human).